The sequence spans 43 residues: Photosystem II reaction center protein Psb30 (43 aa).

Residues 16 to 36 traverse the membrane as a helical segment; it reads IAQLTMLAMVLIAGPVVIVLL.

The protein belongs to the Psb30/Ycf12 family. In terms of assembly, PSII is composed of 1 copy each of membrane proteins PsbA, PsbB, PsbC, PsbD, PsbE, PsbF, PsbH, PsbI, PsbJ, PsbK, PsbL, PsbM, PsbT, PsbX, PsbY, PsbZ, Psb30/Ycf12, peripheral proteins PsbO, CyanoQ (PsbQ), PsbU, PsbV and a large number of cofactors. It forms dimeric complexes.

The protein localises to the cellular thylakoid membrane. Functionally, a core subunit of photosystem II (PSII), probably helps stabilize the reaction center. The sequence is that of Photosystem II reaction center protein Psb30 from Trichodesmium erythraeum (strain IMS101).